The following is a 677-amino-acid chain: Methionine--tRNA ligase (677 aa).

Residues 15-25 (PYANGSIHLGH) carry the 'HIGH' region motif. The Zn(2+) site is built by C146, C149, C159, and C162. A 'KMSKS' region motif is present at residues 333-337 (KMSKS). ATP is bound at residue K336. In terms of domain architecture, tRNA-binding spans 575 to 677 (DFAKVDLRVA…DGAKPGQQVK (103 aa)).

Belongs to the class-I aminoacyl-tRNA synthetase family. MetG type 1 subfamily. As to quaternary structure, homodimer. Requires Zn(2+) as cofactor.

Its subcellular location is the cytoplasm. It catalyses the reaction tRNA(Met) + L-methionine + ATP = L-methionyl-tRNA(Met) + AMP + diphosphate. Is required not only for elongation of protein synthesis but also for the initiation of all mRNA translation through initiator tRNA(fMet) aminoacylation. The sequence is that of Methionine--tRNA ligase from Klebsiella pneumoniae (strain 342).